We begin with the raw amino-acid sequence, 68 residues long: U1-hexatoxin-Hv1a (68 aa).

Disulfide bonds link Cys3–Cys14, Cys8–Cys22, Cys13–Cys48, Cys32–Cys56, and Cys50–Cys63.

This sequence belongs to the MIT-like AcTx family. Expressed by the venom gland.

It is found in the secreted. The polypeptide is U1-hexatoxin-Hv1a (Hadronyche versuta (Blue mountains funnel-web spider)).